The sequence spans 326 residues: MLDKHERNINYMRISLTDRCNLRCRYCMPETGVDNLTHYSILSLEEMARLVRIASELGIQKIRLTGGEPLVRRNVPQLISYIAQIPRIDDIALTTNGTLFAALAEELKTAGLNRINFSLDSLVPEKFKYITRRGDLSKVKEAIFKALELDMHPVKINMVVIRGFNDDEIIDFVELARKYPLHVRFIEFMPVGDLLFWKKDRMMPAQDIKAYIEESYVLTPQKNILGNGPARYYSLEGGEGSLGFISPMSNHFCGECNRIRLTAEGGLRGCLYDKREVNLKTALKNGSSDEEIKELFIWAIKAKPARHHMNNGWGEENKRKMYQIGG.

A Radical SAM core domain is found at 4–227; that stretch reads KHERNINYMR…LTPQKNILGN (224 aa). A GTP-binding site is contributed by Arg-13. Residues Cys-20 and Cys-24 each contribute to the [4Fe-4S] cluster site. Tyr-26 contributes to the S-adenosyl-L-methionine binding site. Cys-27 lines the [4Fe-4S] cluster pocket. A GTP-binding site is contributed by Arg-63. Gly-67 is a binding site for S-adenosyl-L-methionine. Position 94 (Thr-94) interacts with GTP. S-adenosyl-L-methionine is bound at residue Ser-118. Lys-155 is a binding site for GTP. Residue Met-189 coordinates S-adenosyl-L-methionine. [4Fe-4S] cluster-binding residues include Cys-253 and Cys-256. 258–260 is a GTP binding site; the sequence is RIR. Residue Cys-270 participates in [4Fe-4S] cluster binding.

The protein belongs to the radical SAM superfamily. MoaA family. As to quaternary structure, monomer and homodimer. The cofactor is [4Fe-4S] cluster.

It catalyses the reaction GTP + AH2 + S-adenosyl-L-methionine = (8S)-3',8-cyclo-7,8-dihydroguanosine 5'-triphosphate + 5'-deoxyadenosine + L-methionine + A + H(+). Its pathway is cofactor biosynthesis; molybdopterin biosynthesis. Catalyzes the cyclization of GTP to (8S)-3',8-cyclo-7,8-dihydroguanosine 5'-triphosphate. In Syntrophomonas wolfei subsp. wolfei (strain DSM 2245B / Goettingen), this protein is GTP 3',8-cyclase.